The primary structure comprises 273 residues: 2-dehydro-3-deoxyphosphooctonate aldolase (273 aa).

The protein belongs to the KdsA family.

The protein localises to the cytoplasm. The catalysed reaction is D-arabinose 5-phosphate + phosphoenolpyruvate + H2O = 3-deoxy-alpha-D-manno-2-octulosonate-8-phosphate + phosphate. The protein operates within carbohydrate biosynthesis; 3-deoxy-D-manno-octulosonate biosynthesis; 3-deoxy-D-manno-octulosonate from D-ribulose 5-phosphate: step 2/3. It participates in bacterial outer membrane biogenesis; lipopolysaccharide biosynthesis. In Citrifermentans bemidjiense (strain ATCC BAA-1014 / DSM 16622 / JCM 12645 / Bem) (Geobacter bemidjiensis), this protein is 2-dehydro-3-deoxyphosphooctonate aldolase.